The chain runs to 155 residues: 3-hydroxyacyl-[acyl-carrier-protein] dehydratase FabZ (155 aa).

Residue His58 is part of the active site.

Belongs to the thioester dehydratase family. FabZ subfamily.

The protein resides in the cytoplasm. It catalyses the reaction a (3R)-hydroxyacyl-[ACP] = a (2E)-enoyl-[ACP] + H2O. Functionally, involved in unsaturated fatty acids biosynthesis. Catalyzes the dehydration of short chain beta-hydroxyacyl-ACPs and long chain saturated and unsaturated beta-hydroxyacyl-ACPs. The sequence is that of 3-hydroxyacyl-[acyl-carrier-protein] dehydratase FabZ from Rhizobium johnstonii (strain DSM 114642 / LMG 32736 / 3841) (Rhizobium leguminosarum bv. viciae).